We begin with the raw amino-acid sequence, 285 residues long: Bifunctional protein FolD (285 aa).

Residues 165–167 (GRG), Thr-192, and Val-233 contribute to the NADP(+) site.

Belongs to the tetrahydrofolate dehydrogenase/cyclohydrolase family. Homodimer.

It carries out the reaction (6R)-5,10-methylene-5,6,7,8-tetrahydrofolate + NADP(+) = (6R)-5,10-methenyltetrahydrofolate + NADPH. The enzyme catalyses (6R)-5,10-methenyltetrahydrofolate + H2O = (6R)-10-formyltetrahydrofolate + H(+). It functions in the pathway one-carbon metabolism; tetrahydrofolate interconversion. Functionally, catalyzes the oxidation of 5,10-methylenetetrahydrofolate to 5,10-methenyltetrahydrofolate and then the hydrolysis of 5,10-methenyltetrahydrofolate to 10-formyltetrahydrofolate. The polypeptide is Bifunctional protein FolD (Mycobacterium sp. (strain MCS)).